A 449-amino-acid chain; its full sequence is UDP-N-acetylmuramoylalanine--D-glutamate ligase (449 aa).

118–124 (GTNGKTT) is an ATP binding site.

It belongs to the MurCDEF family.

Its subcellular location is the cytoplasm. It catalyses the reaction UDP-N-acetyl-alpha-D-muramoyl-L-alanine + D-glutamate + ATP = UDP-N-acetyl-alpha-D-muramoyl-L-alanyl-D-glutamate + ADP + phosphate + H(+). The protein operates within cell wall biogenesis; peptidoglycan biosynthesis. Functionally, cell wall formation. Catalyzes the addition of glutamate to the nucleotide precursor UDP-N-acetylmuramoyl-L-alanine (UMA). This Staphylococcus haemolyticus (strain JCSC1435) protein is UDP-N-acetylmuramoylalanine--D-glutamate ligase.